Reading from the N-terminus, the 309-residue chain is DnaJ-like protein MG002 homolog (309 aa).

Residues 1 to 66 (MTLYDLLELP…KAEYDAMLRF (66 aa)) form the J domain.

The chain is DnaJ-like protein MG002 homolog from Mycoplasma pneumoniae (strain ATCC 29342 / M129 / Subtype 1) (Mycoplasmoides pneumoniae).